The sequence spans 151 residues: Monooxygenase nsrQ (151 aa).

Belongs to the avfA family.

It functions in the pathway secondary metabolite biosynthesis. In terms of biological role, monooxygenase; part of the gene cluster that mediates the biosynthesis of the tetrahydroxanthone dimer neosartorin, which exhibits antibacterial activity. The two different monomeric units appear to be synthesized by the same set of enzymes, among which the Baeyer-Villiger monooxygenase nsrF is the key enzyme for the divergence of the biosynthetic routes. The pathway begins with the synthesis of atrochrysone thioester by the polyketide synthase nsrB. The atrochrysone carboxyl ACP thioesterase nsrC then breaks the thioester bond and releases the atrochrysone carboxylic acid from AacuL. Atrochrysone carboxylic acid is decarboxylated by the decarboxylase nsrE, and oxidized by the anthrone oxygenase nsrD to yield emodin. Emodin is then reduced to emodin hydroquinone by the oxidoreductase nsrR. A-ring reduction by the short chain dehydrogenase nsrJ, dehydration by the scytalone dehydratase-like protein nsrI and probable spontaneous re-oxidation, results in overall deoxygenation to chrysophanol. The Baeyer-Villiger monooxygenase nsrF accepts chrysophanol as a substrate to insert one oxygen atom at two different positions to yield the precursors of both monomric units. NsrF is promiscuous/flexible in interacting with the 2 (non methylated and methylated) aromatic rings of chrysophanol, thus diverging the biosynthetic pathway at this point. After the hydrolysis of the lactones, methylesterification by the methyltransferase nsrG yields respectively moniliphenone and 2,2',6'-trihydroxy-4-methyl-6-methoxya-cyldiphenylmethanone. The next steps are the hydroxylation by the FAD-dependent monooxygenase nsrK, followed by isomerization by the monooxygenase nsrQ. The short chain dehydrogenase/reductase nsrO then catalyzes the C-5 ketoreduction to give the xanthone skeleton of blennolide C and 5-acetylblennolide A. The acetyltransferase nsrL has a strict substrate specificity and uses only blennolide A but not blennolide C to yield 5-acetylblennolide A as the single-acetylated product. In the final step of the biosynthesis, the heterodimerization of the 2 xanthones, blennolide C and 5-acetylblennolide A, is catalyzed by the cytochrome P450 monooxygenase nsrP. NsrP can utilize at least three different xanthones as its substrates to perform the dimerization reaction. The chain is Monooxygenase nsrQ from Aspergillus novofumigatus (strain IBT 16806).